A 634-amino-acid chain; its full sequence is Chaperone protein HtpG (634 aa).

An a; substrate-binding region spans residues 1–342 (MTVDTDKQTL…SADLSLNVSR (342 aa)). Positions 343–559 (EILQSGPVVD…QGDLGLQMRQ (217 aa)) are b. Positions 560 to 634 (LLEASGQAVP…LNKLLLELSA (75 aa)) are c.

It belongs to the heat shock protein 90 family. In terms of assembly, homodimer.

Its subcellular location is the cytoplasm. Molecular chaperone. Has ATPase activity. In Xanthomonas campestris pv. campestris (strain 8004), this protein is Chaperone protein HtpG.